The primary structure comprises 327 residues: Methionyl-tRNA formyltransferase (327 aa).

121–124 is a binding site for (6S)-5,6,7,8-tetrahydrofolate; the sequence is SLLP.

The protein belongs to the Fmt family.

The enzyme catalyses L-methionyl-tRNA(fMet) + (6R)-10-formyltetrahydrofolate = N-formyl-L-methionyl-tRNA(fMet) + (6S)-5,6,7,8-tetrahydrofolate + H(+). Attaches a formyl group to the free amino group of methionyl-tRNA(fMet). The formyl group appears to play a dual role in the initiator identity of N-formylmethionyl-tRNA by promoting its recognition by IF2 and preventing the misappropriation of this tRNA by the elongation apparatus. The protein is Methionyl-tRNA formyltransferase of Burkholderia ambifaria (strain ATCC BAA-244 / DSM 16087 / CCUG 44356 / LMG 19182 / AMMD) (Burkholderia cepacia (strain AMMD)).